Here is a 604-residue protein sequence, read N- to C-terminus: Glutamine--fructose-6-phosphate aminotransferase [isomerizing] (604 aa).

Catalysis depends on Cys-2, which acts as the Nucleophile; for GATase activity. Residues 2-218 enclose the Glutamine amidotransferase type-2 domain; the sequence is CGIVGVVGNR…DKELVVLTKD (217 aa). 2 consecutive SIS domains span residues 284–423 and 456–594; these read IVKS…ANGK and VANL…VDKP. The active-site For Fru-6P isomerization activity is the Lys-599.

As to quaternary structure, homodimer.

The protein resides in the cytoplasm. It catalyses the reaction D-fructose 6-phosphate + L-glutamine = D-glucosamine 6-phosphate + L-glutamate. Functionally, catalyzes the first step in hexosamine metabolism, converting fructose-6P into glucosamine-6P using glutamine as a nitrogen source. In Streptococcus mutans serotype c (strain ATCC 700610 / UA159), this protein is Glutamine--fructose-6-phosphate aminotransferase [isomerizing].